The sequence spans 473 residues: Probable transporter MCH2 (473 aa).

The Cytoplasmic portion of the chain corresponds to M1 to D37. A helical transmembrane segment spans residues G38–A58. Residues N59 to Y83 are Extracellular-facing. N-linked (GlcNAc...) asparagine glycosylation occurs at N72. The chain crosses the membrane as a helical span at residues A84–Y105. At H106–Q111 the chain is on the cytoplasmic side. Residues F112–W135 form a helical membrane-spanning segment. The Extracellular portion of the chain corresponds to E136 to Q141. The helical transmembrane segment at G142–W163 threads the bilayer. Over F164–S169 the chain is Cytoplasmic. Residues L170 to F186 form a helical membrane-spanning segment. At N187–K200 the chain is on the extracellular side. A helical membrane pass occupies residues W201–L220. The Cytoplasmic segment spans residues T221 to D243. The helical transmembrane segment at V244–L268 threads the bilayer. Residues Y269–S286 lie on the Extracellular side of the membrane. Residues Y287–G304 form a helical membrane-spanning segment. Topologically, residues H305–S312 are cytoplasmic. Residues L313–I332 traverse the membrane as a helical segment. Residues P333 to A342 are Extracellular-facing. A helical transmembrane segment spans residues F343 to V362. The Cytoplasmic segment spans residues T363–K370. Residues L371–L394 form a helical membrane-spanning segment. The Extracellular segment spans residues E395–R408. A helical transmembrane segment spans residues T409–A433. Residues R434–V473 are Cytoplasmic-facing.

Belongs to the major facilitator superfamily. Monocarboxylate porter (TC 2.A.1.13) family.

The protein localises to the membrane. Its function is as follows. Probable transporter. Does not act in the transport of monocarboxylic acids across the plasma membrane. This chain is Probable transporter MCH2 (MCH2), found in Saccharomyces cerevisiae (strain ATCC 204508 / S288c) (Baker's yeast).